The following is a 201-amino-acid chain: Large ribosomal subunit protein uL4 (201 aa).

The segment at 45 to 72 is disordered; it reads AQKTRAEVTGSGKKPWRQKGTGRARAGS.

Belongs to the universal ribosomal protein uL4 family. In terms of assembly, part of the 50S ribosomal subunit.

In terms of biological role, one of the primary rRNA binding proteins, this protein initially binds near the 5'-end of the 23S rRNA. It is important during the early stages of 50S assembly. It makes multiple contacts with different domains of the 23S rRNA in the assembled 50S subunit and ribosome. Its function is as follows. Forms part of the polypeptide exit tunnel. The sequence is that of Large ribosomal subunit protein uL4 from Shewanella frigidimarina (strain NCIMB 400).